Consider the following 337-residue polypeptide: Phosphate acyltransferase (337 aa).

It belongs to the PlsX family. As to quaternary structure, homodimer. Probably interacts with PlsY.

The protein resides in the cytoplasm. The enzyme catalyses a fatty acyl-[ACP] + phosphate = an acyl phosphate + holo-[ACP]. It functions in the pathway lipid metabolism; phospholipid metabolism. Its function is as follows. Catalyzes the reversible formation of acyl-phosphate (acyl-PO(4)) from acyl-[acyl-carrier-protein] (acyl-ACP). This enzyme utilizes acyl-ACP as fatty acyl donor, but not acyl-CoA. In Halalkalibacterium halodurans (strain ATCC BAA-125 / DSM 18197 / FERM 7344 / JCM 9153 / C-125) (Bacillus halodurans), this protein is Phosphate acyltransferase.